The chain runs to 288 residues: Bifunctional protein FolD 2 (288 aa).

Residues 166–168 and serine 191 contribute to the NADP(+) site; that span reads GRS.

It belongs to the tetrahydrofolate dehydrogenase/cyclohydrolase family. Homodimer.

It carries out the reaction (6R)-5,10-methylene-5,6,7,8-tetrahydrofolate + NADP(+) = (6R)-5,10-methenyltetrahydrofolate + NADPH. The enzyme catalyses (6R)-5,10-methenyltetrahydrofolate + H2O = (6R)-10-formyltetrahydrofolate + H(+). The protein operates within one-carbon metabolism; tetrahydrofolate interconversion. Catalyzes the oxidation of 5,10-methylenetetrahydrofolate to 5,10-methenyltetrahydrofolate and then the hydrolysis of 5,10-methenyltetrahydrofolate to 10-formyltetrahydrofolate. The polypeptide is Bifunctional protein FolD 2 (Myxococcus xanthus (strain DK1622)).